The chain runs to 306 residues: Aspartate carbamoyltransferase catalytic subunit (306 aa).

The carbamoyl phosphate site is built by Arg55 and Thr56. Lys84 serves as a coordination point for L-aspartate. Carbamoyl phosphate contacts are provided by Arg105, His133, and Gln136. L-aspartate contacts are provided by Arg166 and Arg227. 2 residues coordinate carbamoyl phosphate: Leu265 and Pro266.

This sequence belongs to the aspartate/ornithine carbamoyltransferase superfamily. ATCase family. In terms of assembly, heterododecamer (2C3:3R2) of six catalytic PyrB chains organized as two trimers (C3), and six regulatory PyrI chains organized as three dimers (R2).

The enzyme catalyses carbamoyl phosphate + L-aspartate = N-carbamoyl-L-aspartate + phosphate + H(+). It functions in the pathway pyrimidine metabolism; UMP biosynthesis via de novo pathway; (S)-dihydroorotate from bicarbonate: step 2/3. Functionally, catalyzes the condensation of carbamoyl phosphate and aspartate to form carbamoyl aspartate and inorganic phosphate, the committed step in the de novo pyrimidine nucleotide biosynthesis pathway. The sequence is that of Aspartate carbamoyltransferase catalytic subunit from Aeromonas hydrophila subsp. hydrophila (strain ATCC 7966 / DSM 30187 / BCRC 13018 / CCUG 14551 / JCM 1027 / KCTC 2358 / NCIMB 9240 / NCTC 8049).